A 303-amino-acid polypeptide reads, in one-letter code: Coenzyme PQQ synthesis protein B (303 aa).

It belongs to the PqqB family.

It functions in the pathway cofactor biosynthesis; pyrroloquinoline quinone biosynthesis. May be involved in the transport of PQQ or its precursor to the periplasm. This is Coenzyme PQQ synthesis protein B from Pseudomonas syringae pv. tomato (strain ATCC BAA-871 / DC3000).